A 213-amino-acid chain; its full sequence is MAMKASIKGKYDTDKTSGIGSLAFNAGDIKLRATMTDATLVAGPTLTGLALAVEKPGSFIVEYNVPKKDVRFQFMNTVRIAEKPLNLTYIHSRADNRTIVDGSLVIDSANKLSANHMVGTNNCKIKYTYAHGGLATFEPCYDLAKNTWDFAVSRRFYSGDNVRATYQTSSKLLGMEWSRNNKASGFKVCASVNLADELKTPKLTAETTWNLEM.

Residues 1-3 (MAM) lie on the Cytoplasmic side of the membrane. Residues 4–13 (KASIKGKYDT) traverse the membrane as a beta stranded segment. Topologically, residues 14–18 (DKTSG) are chloroplast intermembrane. Residues 19–28 (IGSLAFNAGD) traverse the membrane as a beta stranded segment. Residues 29-32 (IKLR) lie on the Cytoplasmic side of the membrane. Residues 33–42 (ATMTDATLVA) form a beta stranded membrane-spanning segment. The Chloroplast intermembrane portion of the chain corresponds to 43 to 55 (GPTLTGLALAVEK). A beta stranded membrane pass occupies residues 56-64 (PGSFIVEYN). Topologically, residues 65-70 (VPKKDV) are cytoplasmic. Residues 71-80 (RFQFMNTVRI) traverse the membrane as a beta stranded segment. The Chloroplast intermembrane segment spans residues 81–93 (AEKPLNLTYIHSR). A beta stranded transmembrane segment spans residues 94 to 103 (ADNRTIVDGS). Topologically, residues 104 to 108 (LVIDS) are cytoplasmic. The beta stranded transmembrane segment at 109-118 (ANKLSANHMV) threads the bilayer. Over 119-122 (GTNN) the chain is Chloroplast intermembrane. A beta stranded transmembrane segment spans residues 123 to 132 (CKIKYTYAHG). Over 133-144 (GLATFEPCYDLA) the chain is Cytoplasmic. The beta stranded transmembrane segment at 145–156 (KNTWDFAVSRRF) threads the bilayer. Over 157–159 (YSG) the chain is Chloroplast intermembrane. Residues 160 to 168 (DNVRATYQT) traverse the membrane as a beta stranded segment. Residues 169–170 (SS) lie on the Cytoplasmic side of the membrane. A beta stranded membrane pass occupies residues 171 to 179 (KLLGMEWSR). The Chloroplast intermembrane portion of the chain corresponds to 180–201 (NNKASGFKVCASVNLADELKTP). A beta stranded membrane pass occupies residues 202 to 211 (KLTAETTWNL). At 212–213 (EM) the chain is on the cytoplasmic side.

It belongs to the plastid outer envelope porin OEP24 (TC 1.B.28) family. As to quaternary structure, homooligomers form large rather nonselective pores in plastidial outer membranes.

The protein resides in the plastid. Its subcellular location is the etioplast membrane. The protein localises to the chloroplast outer membrane. Functionally, high-conductance voltage-dependent solute channel with a slight selectivity for cations transporting triosephosphates, dicarboxylic acids, ATP, inorganic phosphate (Pi), sugars, and positively or negatively charged amino acids. The chain is Outer envelope pore protein 24B, chloroplastic (OEP24B) from Arabidopsis thaliana (Mouse-ear cress).